The primary structure comprises 81 residues: Sulfur carrier protein TusA (81 aa).

C19 acts as the Cysteine persulfide intermediate in catalysis.

This sequence belongs to the sulfur carrier protein TusA family. Interacts with IscS.

The protein localises to the cytoplasm. Its pathway is tRNA modification. In terms of biological role, sulfur carrier protein involved in sulfur trafficking in the cell. Part of a sulfur-relay system required for 2-thiolation during synthesis of 2-thiouridine of the modified wobble base 5-methylaminomethyl-2-thiouridine (mnm(5)s(2)U) in tRNA. Interacts with IscS and stimulates its cysteine desulfurase activity. Accepts an activated sulfur from IscS, which is then transferred to TusD, and thus determines the direction of sulfur flow from IscS to 2-thiouridine formation. Also appears to be involved in sulfur transfer for the biosynthesis of molybdopterin. The polypeptide is Sulfur carrier protein TusA (Salmonella choleraesuis (strain SC-B67)).